A 125-amino-acid polypeptide reads, in one-letter code: Putative superoxide reductase (125 aa).

Residues Glu-12, His-14, His-40, His-46, Cys-110, and His-113 each coordinate Fe cation.

This sequence belongs to the desulfoferrodoxin family. Fe cation is required as a cofactor.

It catalyses the reaction reduced [rubredoxin] + superoxide + 2 H(+) = oxidized [rubredoxin] + H2O2. In terms of biological role, uses electrons from reduced NADP, by way of rubredoxin and an oxidoreductase, to catalyze the reduction of superoxide to hydrogen peroxide. The polypeptide is Putative superoxide reductase (Archaeoglobus fulgidus (strain ATCC 49558 / DSM 4304 / JCM 9628 / NBRC 100126 / VC-16)).